A 106-amino-acid polypeptide reads, in one-letter code: Large ribosomal subunit protein bL21 (106 aa).

Belongs to the bacterial ribosomal protein bL21 family. In terms of assembly, part of the 50S ribosomal subunit. Contacts protein L20.

Functionally, this protein binds to 23S rRNA in the presence of protein L20. This chain is Large ribosomal subunit protein bL21, found in Chlamydia felis (strain Fe/C-56) (Chlamydophila felis).